A 912-amino-acid chain; its full sequence is Transcription factor bHLH140 (912 aa).

The segment at 1 to 57 is disordered; sequence MDDFNLRSENPNSSSTTSSSSSSFHRHKSETGNTKRSRSTSTLSTDPQSVAARDRRH. Residues 13-23 show a composition bias toward low complexity; sequence SSSTTSSSSSS. One can recognise a bHLH domain in the interval 43-92; it reads LSTDPQSVAARDRRHRISDRFKILQSMVPGGAKMDTVSMLDEAISYVKFL. 234–241 is an ATP binding site; it reads GPPGSGKS. Residues 511-690 form the Macro domain; the sequence is KAKASQKNID…KYKGSQDKAV (180 aa). Residues 657–666 show a composition bias toward polar residues; it reads PKRSSQTAVS. The disordered stretch occupies residues 657 to 706; the sequence is PKRSSQTAVSDSGEDIKEDSERNKKYKGSQDKAVTNNLESESLEDTRGSG. The HIT domain occupies 720–829; it reads LHSIAMHPER…SQDFNSDSLK (110 aa). Residues 870-893 form a C2H2-type zinc finger; the sequence is LRCNRCRSAHPNIPKLKSHVRSCH.

Homodimer.

It localises to the nucleus. The protein is Transcription factor bHLH140 (BHLH140) of Arabidopsis thaliana (Mouse-ear cress).